The sequence spans 842 residues: Alanine--tRNA ligase (842 aa).

Residues histidine 549, histidine 553, cysteine 650, and histidine 654 each coordinate Zn(2+).

It belongs to the class-II aminoacyl-tRNA synthetase family. The cofactor is Zn(2+).

The protein localises to the cytoplasm. It carries out the reaction tRNA(Ala) + L-alanine + ATP = L-alanyl-tRNA(Ala) + AMP + diphosphate. Catalyzes the attachment of alanine to tRNA(Ala) in a two-step reaction: alanine is first activated by ATP to form Ala-AMP and then transferred to the acceptor end of tRNA(Ala). Also edits incorrectly charged Ser-tRNA(Ala) and Gly-tRNA(Ala) via its editing domain. The protein is Alanine--tRNA ligase of Campylobacter jejuni subsp. jejuni serotype O:2 (strain ATCC 700819 / NCTC 11168).